Consider the following 598-residue polypeptide: MLFLVISQTTSFMITVRQFTFTIFKFQFMATSNVSSRVNELLEAVKKEFEDICQKTKTVEAQKDDFEYKAMISAQINEMALMKQTVMDLEMQQSKVKDRYEEEITSLKAQLEARRKEIASGVVPQSSKTKHGRNSVSFGKYGNAGPFNSDNSSKPLILNNGSSGGTPKNLRSPAIDSDGTVLAPIQTSNVDLGSQYYSSPHVRPAVGATMAGSAMRTFPSNLPLGHPPPPSDSANSSVTPIAAPLVVNGKVSGNPPYPAEIIPTSNVPNREEKDWTVTSNVPNKEPPISVQLLHTLEHTSVICYVRFSADGKFLATGCNRAAMVFNVETGKLITLLQEESSKREGDLYVRSVAFSPDGKYLATGVEDQQIRIWDIAQKRVYRLLTGHEQEIYSLDFSKDGKTLVSGSGDRTVCLWDVEAGEQKLILHTDDGVTTVMFSPDGQFIAAGSLDKVIRIWTSSGTLVEQLHGHEESVYSVAFSPDGKYLVSGSLDNTIKLWELQCVSNVAPSMYKEGGICKQTFTGHKDFILSVTVSPDGKWIISGSKDRTIQFWSPDSPHSQLTLQGHNNSVISVAVSPNGHCFATGSGDLRARIWSYEDL.

Residues 118–177 (IASGVVPQSSKTKHGRNSVSFGKYGNAGPFNSDNSSKPLILNNGSSGGTPKNLRSPAIDS) form a disordered region. WD repeat units lie at residues 285 to 325 (EPPI…AMVF), 332 to 371 (LITLLQEESSKREGDLYVRSVAFSPDGKYLATGVEDQQIR), 374 to 413 (DIAQKRVYRLLTGHEQEIYSLDFSKDGKTLVSGSGDRTVC), 415 to 454 (WDVEAGEQKLILHTDDGVTTVMFSPDGQFIAAGSLDKVIR), 456 to 495 (WTSSGTLVEQLHGHEESVYSVAFSPDGKYLVSGSLDNTIK), 510 to 549 (YKEGGICKQTFTGHKDFILSVTVSPDGKWIISGSKDRTIQ), and 552 to 585 (SPDSPHSQLTLQGHNNSVISVAVSPNGHCFATGS).

Belongs to the WD repeat TUP1 family.

Functionally, transcriptional repressor. In Schizosaccharomyces pombe (strain 972 / ATCC 24843) (Fission yeast), this protein is Transcriptional repressor tup12 (tup12).